A 490-amino-acid chain; its full sequence is C-type lectin domain family 14 member A (490 aa).

A signal peptide spans 1–21 (MRPAFALCLLWQALWPGPGGG). Residues 22–397 (EHPTADRAGC…TPQAFDSSSA (376 aa)) are Extracellular-facing. A C-type lectin domain is found at 33 to 173 (ASGACYSLHH…LRANGYLCKY (141 aa)). Cys-143 and Cys-162 are oxidised to a cystine. Asn-189 carries N-linked (GlcNAc...) asparagine glycosylation. The region spanning 245-287 (PCPGRYLRAGKCAELPNCLDDLGGFACECATGFELGKDGRSCV) is the EGF-like domain. Residues 286-349 (CVTSGEGQPT…VTSIPEIPRW (64 aa)) are disordered. Positions 301 to 315 (VPTRRPPATATSPVP) are enriched in low complexity. Asn-381 is a glycosylation site (N-linked (GlcNAc...) asparagine). A helical transmembrane segment spans residues 398–418 (VVFIFVSTAVVVLVILTMTVL). Over 419–490 (GLVKLCFHES…AESPLGSSDA (72 aa)) the chain is Cytoplasmic. Positions 428–461 (SPSSQPRKESMGPPGLESDPEPAALGSSSAHCTN) are disordered.

The protein localises to the membrane. The chain is C-type lectin domain family 14 member A (CLEC14A) from Homo sapiens (Human).